A 415-amino-acid polypeptide reads, in one-letter code: Imidazolonepropionase (415 aa).

Fe(3+) is bound by residues His74 and His76. His74 and His76 together coordinate Zn(2+). 4-imidazolone-5-propanoate is bound by residues Arg83, Tyr146, and His179. Tyr146 is an N-formimidoyl-L-glutamate binding site. His244 provides a ligand contact to Fe(3+). His244 is a Zn(2+) binding site. Gln247 contacts 4-imidazolone-5-propanoate. Residue Asp319 coordinates Fe(3+). Residue Asp319 coordinates Zn(2+). 2 residues coordinate N-formimidoyl-L-glutamate: Asn321 and Gly323. A 4-imidazolone-5-propanoate-binding site is contributed by Thr324.

The protein belongs to the metallo-dependent hydrolases superfamily. HutI family. Zn(2+) serves as cofactor. Fe(3+) is required as a cofactor.

The protein localises to the cytoplasm. The enzyme catalyses 4-imidazolone-5-propanoate + H2O = N-formimidoyl-L-glutamate. The protein operates within amino-acid degradation; L-histidine degradation into L-glutamate; N-formimidoyl-L-glutamate from L-histidine: step 3/3. Its function is as follows. Catalyzes the hydrolytic cleavage of the carbon-nitrogen bond in imidazolone-5-propanoate to yield N-formimidoyl-L-glutamate. It is the third step in the universal histidine degradation pathway. In Cupriavidus metallidurans (strain ATCC 43123 / DSM 2839 / NBRC 102507 / CH34) (Ralstonia metallidurans), this protein is Imidazolonepropionase.